The chain runs to 79 residues: Tungsten-containing formylmethanofuran dehydrogenase 2 subunit G (79 aa).

4Fe-4S ferredoxin-type domains are found at residues 2–31 (VKIV…SPNV) and 51–79 (TVSV…EIKT). 8 residues coordinate [4Fe-4S] cluster: C11, C14, C17, C21, C60, C63, C66, and C70.

[4Fe-4S] cluster is required as a cofactor.

It catalyses the reaction N-formylmethanofuran + 2 oxidized [2Fe-2S]-[ferredoxin] + H2O = methanofuran + 2 reduced [2Fe-2S]-[ferredoxin] + CO2 + H(+). Its pathway is one-carbon metabolism; methanogenesis from CO(2); 5,10-methenyl-5,6,7,8-tetrahydromethanopterin from CO(2): step 1/3. Not inactivated by cyanide. Functionally, catalyzes the reversible oxidation of CO(2) and methanofuran (MFR) to N-formylmethanofuran (CHO-MFR). This enzyme is oxygen-labile. May function as an electron transfer protein. The protein is Tungsten-containing formylmethanofuran dehydrogenase 2 subunit G (fwdG) of Methanopyrus kandleri (strain AV19 / DSM 6324 / JCM 9639 / NBRC 100938).